The sequence spans 529 residues: Probable serine/threonine protein phosphatase 2A regulatory subunit B''epsilon (529 aa).

The interval 60 to 110 is disordered; that stretch reads KSGTPTNKSKNLPSVFLSSSTPPLSPRSSSGSPRFSRQRTSPPSLHSPLRS. The segment covering 71-109 has biased composition (low complexity); sequence LPSVFLSSSTPPLSPRSSSGSPRFSRQRTSPPSLHSPLR. Residues 381 to 416 form the EF-hand domain; sequence SSEPSLEYWFKCVDLDGNGVITSNEMQFFFEEQLHR. 4 residues coordinate Ca(2+): Asp394, Asp396, Asn398, and Glu405. Residues 507 to 529 form a disordered region; that stretch reads EEDVDEVSNGSADVWDEPLEPPF. The span at 520–529 shows a compositional bias: acidic residues; it reads VWDEPLEPPF.

In terms of assembly, PP2A consists of a common heterodimeric core enzyme, composed of a 36 kDa catalytic subunit (subunit C) and a 65 kDa constant regulatory subunit (PR65 or subunit A), that associates with a variety of regulatory subunits. Proteins that associate with the core dimer include three families of regulatory subunits B (the R2/B/PR55/B55, R3/B''/PR72/PR130/PR59 and R5/B'/B56 families) and cell signaling molecules.

Probable regulatory subunit of type 2A protein phosphatase. The protein is Probable serine/threonine protein phosphatase 2A regulatory subunit B''epsilon (B''EPSILON) of Arabidopsis thaliana (Mouse-ear cress).